A 339-amino-acid chain; its full sequence is Glyceraldehyde-3-phosphate dehydrogenase (339 aa).

NAD(+) contacts are provided by residues 11-12 (TI) and glycine 110. Residue 139-141 (SCN) coordinates D-glyceraldehyde 3-phosphate. Cysteine 140 functions as the Nucleophile in the catalytic mechanism. Residue arginine 168 participates in NAD(+) binding. 194-195 (HG) contacts D-glyceraldehyde 3-phosphate. Glutamine 301 contacts NAD(+).

It belongs to the glyceraldehyde-3-phosphate dehydrogenase family. In terms of assembly, homotetramer.

It localises to the cytoplasm. The catalysed reaction is D-glyceraldehyde 3-phosphate + phosphate + NADP(+) = (2R)-3-phospho-glyceroyl phosphate + NADPH + H(+). The enzyme catalyses D-glyceraldehyde 3-phosphate + phosphate + NAD(+) = (2R)-3-phospho-glyceroyl phosphate + NADH + H(+). The protein operates within carbohydrate degradation; glycolysis; pyruvate from D-glyceraldehyde 3-phosphate: step 1/5. This Methanospirillum hungatei JF-1 (strain ATCC 27890 / DSM 864 / NBRC 100397 / JF-1) protein is Glyceraldehyde-3-phosphate dehydrogenase.